The chain runs to 658 residues: Endoplasmic reticulum chaperone BiP (658 aa).

Residues 1 to 19 (MVTMKLFALVLLVSASVFA) form the signal peptide. Residues 38–41 (GTTY), K98, 228–230 (GGT), 294–301 (EKAKRALS), and 365–368 (GSTR) each bind ATP. The interval 127–281 (KPYIEVDIGD…KKKTGKDVRA (155 aa)) is nucleotide-binding (NBD). An interdomain linker region spans residues 410–420 (QDTGDLVLLDV). The interval 421 to 501 (CPLTLGIETV…PRGVPQIEVT (81 aa)) is substrate-binding (SBD). The segment at 634–658 (KLYGGAGAPPPEGAEGAEETEKDEL) is disordered. Residues 648-658 (EGAEETEKDEL) are compositionally biased toward acidic residues. The Prevents secretion from ER motif lies at 655–658 (KDEL).

Belongs to the heat shock protein 70 family. In terms of assembly, monomer and homooligomer; homooligomerization via the interdomain linker inactivates the chaperone activity and acts as a storage of hspa5/BiP molecules. Interacts with DNAJC10. Interacts with dnajb9/ERdj4; leading to recruit hspa5/BiP to ern1/ire1. Interacts with ern1/ire1; interaction takes place following interaction with dnajb9/ERdj4 and leads to inactivate ern1/IRE1.

Its subcellular location is the endoplasmic reticulum lumen. It carries out the reaction ATP + H2O = ADP + phosphate + H(+). The chaperone activity is regulated by ATP-induced allosteric coupling of the nucleotide-binding (NBD) and substrate-binding (SBD) domains. In the ADP-bound and nucleotide-free (apo) states, the two domains have little interaction. In contrast, in the ATP-bound state the two domains are tightly coupled, which results in drastically accelerated kinetics in both binding and release of polypeptide substrates. J domain-containing co-chaperones (dnajb9/ERdj4 or dnajc10/ERdj5) stimulate the ATPase activity and are required for efficient substrate recognition by hspa5/BiP. Homooligomerization inactivates participating hspa5/BiP protomers and probably act as reservoirs to store hspa5/BiP molecules when they are not needed by the cell. In terms of biological role, endoplasmic reticulum chaperone that plays a key role in protein folding and quality control in the endoplasmic reticulum lumen. Involved in the correct folding of proteins and degradation of misfolded proteins via its interaction with dnajc10/ERdj5, probably to facilitate the release of dnajc10/ERdj5 from its substrate. Acts as a key repressor of the EIF2AK3/PERK and ERN1/IRE1-mediated unfolded protein response (UPR). In the unstressed endoplasmic reticulum, recruited by DNAJB9/ERdj4 to the luminal region of ERN1/IRE1, leading to disrupt the dimerization of ERN1/IRE1, thereby inactivating ERN1/IRE1. Also binds and inactivates EIF2AK3/PERK in unstressed cells. Accumulation of misfolded protein in the endoplasmic reticulum causes release of HSPA5/BiP from ERN1/IRE1 and EIF2AK3/PERK, allowing their homodimerization and subsequent activation. The sequence is that of Endoplasmic reticulum chaperone BiP from Xenopus laevis (African clawed frog).